The sequence spans 417 residues: Serine--tRNA ligase (417 aa).

226–228 provides a ligand contact to L-serine; the sequence is TSE. ATP-binding positions include 257-259 and Val273; that span reads RRE. Residue Glu280 participates in L-serine binding. 344–347 is an ATP binding site; sequence ELTS. Residue Thr379 coordinates L-serine.

Belongs to the class-II aminoacyl-tRNA synthetase family. Type-1 seryl-tRNA synthetase subfamily. As to quaternary structure, homodimer. The tRNA molecule binds across the dimer.

The protein localises to the cytoplasm. The enzyme catalyses tRNA(Ser) + L-serine + ATP = L-seryl-tRNA(Ser) + AMP + diphosphate + H(+). The catalysed reaction is tRNA(Sec) + L-serine + ATP = L-seryl-tRNA(Sec) + AMP + diphosphate + H(+). Its pathway is aminoacyl-tRNA biosynthesis; selenocysteinyl-tRNA(Sec) biosynthesis; L-seryl-tRNA(Sec) from L-serine and tRNA(Sec): step 1/1. In terms of biological role, catalyzes the attachment of serine to tRNA(Ser). Is also able to aminoacylate tRNA(Sec) with serine, to form the misacylated tRNA L-seryl-tRNA(Sec), which will be further converted into selenocysteinyl-tRNA(Sec). The polypeptide is Serine--tRNA ligase (Mycobacterium sp. (strain JLS)).